A 507-amino-acid polypeptide reads, in one-letter code: Probable cytosol aminopeptidase (507 aa).

2 residues coordinate Mn(2+): Lys-271 and Asp-276. Residue Lys-283 is part of the active site. 3 residues coordinate Mn(2+): Asp-294, Asp-353, and Glu-355. Residue Arg-357 is part of the active site.

The protein belongs to the peptidase M17 family. Mn(2+) serves as cofactor.

It localises to the cytoplasm. The catalysed reaction is Release of an N-terminal amino acid, Xaa-|-Yaa-, in which Xaa is preferably Leu, but may be other amino acids including Pro although not Arg or Lys, and Yaa may be Pro. Amino acid amides and methyl esters are also readily hydrolyzed, but rates on arylamides are exceedingly low.. The enzyme catalyses Release of an N-terminal amino acid, preferentially leucine, but not glutamic or aspartic acids.. In terms of biological role, presumably involved in the processing and regular turnover of intracellular proteins. Catalyzes the removal of unsubstituted N-terminal amino acids from various peptides. This chain is Probable cytosol aminopeptidase, found in Nitratidesulfovibrio vulgaris (strain ATCC 29579 / DSM 644 / CCUG 34227 / NCIMB 8303 / VKM B-1760 / Hildenborough) (Desulfovibrio vulgaris).